The chain runs to 594 residues: Elongation factor 4 (594 aa).

The 183-residue stretch at 2-184 (KNIRNFSIIA…TIVAKVPAPE (183 aa)) folds into the tr-type G domain. GTP-binding positions include 14–19 (DHGKST) and 131–134 (NKID).

It belongs to the TRAFAC class translation factor GTPase superfamily. Classic translation factor GTPase family. LepA subfamily.

Its subcellular location is the cell inner membrane. The enzyme catalyses GTP + H2O = GDP + phosphate + H(+). Required for accurate and efficient protein synthesis under certain stress conditions. May act as a fidelity factor of the translation reaction, by catalyzing a one-codon backward translocation of tRNAs on improperly translocated ribosomes. Back-translocation proceeds from a post-translocation (POST) complex to a pre-translocation (PRE) complex, thus giving elongation factor G a second chance to translocate the tRNAs correctly. Binds to ribosomes in a GTP-dependent manner. The sequence is that of Elongation factor 4 from Francisella tularensis subsp. novicida (strain U112).